Consider the following 179-residue polypeptide: Large ribosomal subunit protein uL5 (179 aa).

Belongs to the universal ribosomal protein uL5 family. As to quaternary structure, part of the 50S ribosomal subunit; part of the 5S rRNA/L5/L18/L25 subcomplex. Contacts the 5S rRNA and the P site tRNA. Forms a bridge to the 30S subunit in the 70S ribosome.

This is one of the proteins that bind and probably mediate the attachment of the 5S RNA into the large ribosomal subunit, where it forms part of the central protuberance. In the 70S ribosome it contacts protein S13 of the 30S subunit (bridge B1b), connecting the 2 subunits; this bridge is implicated in subunit movement. Contacts the P site tRNA; the 5S rRNA and some of its associated proteins might help stabilize positioning of ribosome-bound tRNAs. This chain is Large ribosomal subunit protein uL5, found in Lawsonia intracellularis (strain PHE/MN1-00).